Consider the following 683-residue polypeptide: uncharacterized protein (683 aa).

3 coiled-coil regions span residues 62–124, 155–259, and 346–376; these read PEHY…RKER, TTTN…KLSQ, and KKSL…DGDV. Residues 213–237 are disordered; the sequence is QDQVESQTGPKKRRKSPIENQPTAG.

This is an uncharacterized protein from Invertebrate iridescent virus 3 (IIV-3).